The chain runs to 401 residues: MAKKKCVLAYSGGLDTSVAIHWIKENYDADVVALAVDVGANDKDLEFIRQKALSIGAVKSYVYDARKEFAYDFILPTLQANACYESKYYLSAALSRPLIAKLLVQIAEEEGADFVAHGCTGKGNDQVRFEVSVAALNPNLQVLAPVREWGWSREEEIDYAQKHGIPVPVGKENPFSIDVNLWGRSCEAGVLEDPWAEAPEEAFEWTVNPKDAPDEPEYVEIGFEQGVPVSLNGEALDLVTLIERLHAIAGRHGVGRIDHVENRLVGIKSREVYEMPAAAVLTLAHKELETITLPRELHHFKLGLEQKYAELVYNGLWFHPLKEALDAFIKKSQETVTGTVRVRLFKGSAFCVGRTSPYTLYSYDLATYDKADKFDHKAAKGFIDIFGLPTKVYAAVQKSKA.

9 to 17 (AYSGGLDTS) is a binding site for ATP. Y88 serves as a coordination point for L-citrulline. G118 serves as a coordination point for ATP. L-aspartate contacts are provided by T120, N124, and D125. Position 124 (N124) interacts with L-citrulline. Positions 128, 176, 185, 261, and 273 each coordinate L-citrulline.

This sequence belongs to the argininosuccinate synthase family. Type 1 subfamily. Homotetramer.

The protein resides in the cytoplasm. It carries out the reaction L-citrulline + L-aspartate + ATP = 2-(N(omega)-L-arginino)succinate + AMP + diphosphate + H(+). The protein operates within amino-acid biosynthesis; L-arginine biosynthesis; L-arginine from L-ornithine and carbamoyl phosphate: step 2/3. The protein is Argininosuccinate synthase of Symbiobacterium thermophilum (strain DSM 24528 / JCM 14929 / IAM 14863 / T).